The following is a 431-amino-acid chain: GTPase Obg (431 aa).

The Obg domain maps to 1–158 (MFVDQVKISL…IEVTLELKLL (158 aa)). A disordered region spans residues 118–144 (KGGRGGRGNSRFASPRNPAPDFSENGE). In terms of domain architecture, OBG-type G spans 159–330 (ADVGLVGFPS…LLYAIADKLE (172 aa)). Residues 165–172 (GFPSVGKS), 190–194 (FTTIK), 212–215 (DLPG), 282–285 (NKMD), and 311–313 (STF) each bind GTP. Mg(2+)-binding residues include Ser172 and Thr192. The region spanning 353–431 (KHTPSQDKFT…ILGGEFEFVE (79 aa)) is the OCT domain.

Belongs to the TRAFAC class OBG-HflX-like GTPase superfamily. OBG GTPase family. As to quaternary structure, monomer. The cofactor is Mg(2+).

The protein localises to the cytoplasm. In terms of biological role, an essential GTPase which binds GTP, GDP and possibly (p)ppGpp with moderate affinity, with high nucleotide exchange rates and a fairly low GTP hydrolysis rate. Plays a role in control of the cell cycle, stress response, ribosome biogenesis and in those bacteria that undergo differentiation, in morphogenesis control. This Staphylococcus saprophyticus subsp. saprophyticus (strain ATCC 15305 / DSM 20229 / NCIMB 8711 / NCTC 7292 / S-41) protein is GTPase Obg.